The sequence spans 669 residues: Putative heme-binding protein rrnAC3100 (669 aa).

Position 181 (histidine 181) interacts with heme. Disordered regions lie at residues 260 to 351 (RVPT…PDVS) and 451 to 477 (LGGS…ESSQ). In terms of domain architecture, ABM spans 579–667 (GTMGMFYTVK…VLADRPRHVF (89 aa)).

The protein in the N-terminal section; belongs to the ChdC family.

The protein is Putative heme-binding protein rrnAC3100 of Haloarcula marismortui (strain ATCC 43049 / DSM 3752 / JCM 8966 / VKM B-1809) (Halobacterium marismortui).